The following is a 555-amino-acid chain: Meiotic mRNA stability protein kinase SSN3 (555 aa).

Positions 75–463 constitute a Protein kinase domain; sequence YEVIGYIAAG…AFNALEHKYF (389 aa). Position 81-89 (81-89) interacts with ATP; that stretch reads IAAGTYGKV. Polar residues predominate over residues 100 to 138; sequence TNSANGSSLNGTNAKIPQFDSTQPKSSSSMDMQANTNAL. The tract at residues 100 to 166 is disordered; that stretch reads TNSANGSSLN…REDVSPHYNS (67 aa). Lys-183 contributes to the ATP binding site. Asp-286 functions as the Proton acceptor in the catalytic mechanism.

The protein belongs to the protein kinase superfamily. CMGC Ser/Thr protein kinase family. CDC2/CDKX subfamily. Component of the SRB8-11 complex which consists of SRB8, SSN2/SRB9, SSN3/SRB10 and SSN8/SRB11. The SRB8-11 complex associates with the Mediator complex. The SSN3/SRB10 and SSN8/SRB11 kinase-cyclin pair also associate with the RNA polymerase II holoenzyme. Interacts with TUP1.

Its subcellular location is the nucleus. It carries out the reaction L-seryl-[protein] + ATP = O-phospho-L-seryl-[protein] + ADP + H(+). The enzyme catalyses L-threonyl-[protein] + ATP = O-phospho-L-threonyl-[protein] + ADP + H(+). It catalyses the reaction [DNA-directed RNA polymerase] + ATP = phospho-[DNA-directed RNA polymerase] + ADP + H(+). Functionally, component of the SRB8-11 complex. The SRB8-11 complex is a regulatory module of the Mediator complex which is itself involved in regulation of basal and activated RNA polymerase II-dependent transcription. The SRB8-11 complex may be involved in the transcriptional repression of a subset of genes regulated by Mediator. It may inhibit the association of the Mediator complex with RNA polymerase II to form the holoenzyme complex. The SRB8-11 complex phosphorylates the C-terminal domain (CTD) of the largest subunit of RNA polymerase II RPB1 at serines 2 and 5. The SSN3/SRB10 and SSN8/SRB11 kinase-cyclin pair may also positively and negatively regulate numerous transcriptional activators in response to changes in nutritional and physiological conditions. Phosphorylates GCN4, promoting its ubiquitin-mediated degradation, and MSN2, promoting its nuclear exclusion. Phosphorylates STE12, thereby promoting its degradation and inhibition of filamentous growth. Phosphorylates GAL4, and this phosphorylation is required for efficient galactose-inducible transcription. Also phosphorylates BDF1 and the TAF2 subunit of the TFIID complex. The chain is Meiotic mRNA stability protein kinase SSN3 (SSN3) from Saccharomyces cerevisiae (strain ATCC 204508 / S288c) (Baker's yeast).